A 76-amino-acid chain; its full sequence is Exodeoxyribonuclease 7 small subunit (76 aa).

Belongs to the XseB family. In terms of assembly, heterooligomer composed of large and small subunits.

The protein resides in the cytoplasm. It carries out the reaction Exonucleolytic cleavage in either 5'- to 3'- or 3'- to 5'-direction to yield nucleoside 5'-phosphates.. Its function is as follows. Bidirectionally degrades single-stranded DNA into large acid-insoluble oligonucleotides, which are then degraded further into small acid-soluble oligonucleotides. The protein is Exodeoxyribonuclease 7 small subunit of Arthrobacter sp. (strain FB24).